The primary structure comprises 334 residues: Glyceraldehyde-3-phosphate dehydrogenase (334 aa).

NAD(+) is bound by residues 10 to 11 (RI), Asp-33, Lys-77, and Thr-119. D-glyceraldehyde 3-phosphate is bound by residues 149–151 (SCT), Thr-180, 209–210 (TG), and Arg-232. Residue Cys-150 is the Nucleophile of the active site. Position 314 (Asn-314) interacts with NAD(+).

The protein belongs to the glyceraldehyde-3-phosphate dehydrogenase family. As to quaternary structure, homotetramer.

The protein localises to the cytoplasm. It carries out the reaction D-glyceraldehyde 3-phosphate + phosphate + NAD(+) = (2R)-3-phospho-glyceroyl phosphate + NADH + H(+). Its pathway is carbohydrate degradation; glycolysis; pyruvate from D-glyceraldehyde 3-phosphate: step 1/5. Catalyzes the oxidative phosphorylation of glyceraldehyde 3-phosphate (G3P) to 1,3-bisphosphoglycerate (BPG) using the cofactor NAD. The first reaction step involves the formation of a hemiacetal intermediate between G3P and a cysteine residue, and this hemiacetal intermediate is then oxidized to a thioester, with concomitant reduction of NAD to NADH. The reduced NADH is then exchanged with the second NAD, and the thioester is attacked by a nucleophilic inorganic phosphate to produce BPG. The chain is Glyceraldehyde-3-phosphate dehydrogenase (gap) from Chlamydia trachomatis serovar L2 (strain ATCC VR-902B / DSM 19102 / 434/Bu).